Reading from the N-terminus, the 492-residue chain is Glycylpeptide N-tetradecanoyltransferase (492 aa).

Basic and acidic residues predominate over residues 1 to 22 (MSDSKDRKGKAPEGQSSEKKDG). The disordered stretch occupies residues 1 to 45 (MSDSKDRKGKAPEGQSSEKKDGAVNITPQMAESLLENNPALRNET). Residues 82 to 85 (YKFW), 215 to 217 (LCI), and 223 to 227 (SKRLT) contribute to the tetradecanoyl-CoA site. The active-site Proton acceptor; via carboxylate is the Leu492.

The protein belongs to the NMT family. As to quaternary structure, monomer.

It localises to the cytoplasm. It carries out the reaction N-terminal glycyl-[protein] + tetradecanoyl-CoA = N-tetradecanoylglycyl-[protein] + CoA + H(+). In terms of biological role, adds a myristoyl group to the N-terminal glycine residue of certain cellular proteins. This chain is Glycylpeptide N-tetradecanoyltransferase (nmt1), found in Aspergillus fumigatus (strain ATCC MYA-4609 / CBS 101355 / FGSC A1100 / Af293) (Neosartorya fumigata).